The following is an 80-amino-acid chain: Putative membrane protein insertion efficiency factor (80 aa).

This sequence belongs to the UPF0161 family.

The protein localises to the cell inner membrane. In terms of biological role, could be involved in insertion of integral membrane proteins into the membrane. This Syntrophobacter fumaroxidans (strain DSM 10017 / MPOB) protein is Putative membrane protein insertion efficiency factor.